The following is a 467-amino-acid chain: Xanthan biosynthesis protein XanB (467 aa).

Belongs to the mannose-6-phosphate isomerase type 2 family.

It catalyses the reaction D-mannose 6-phosphate = D-fructose 6-phosphate. It carries out the reaction alpha-D-mannose 1-phosphate + GTP + H(+) = GDP-alpha-D-mannose + diphosphate. It functions in the pathway nucleotide-sugar biosynthesis; GDP-alpha-D-mannose biosynthesis; GDP-alpha-D-mannose from alpha-D-mannose 1-phosphate (GTP route): step 1/1. It participates in nucleotide-sugar biosynthesis; GDP-alpha-D-mannose biosynthesis; alpha-D-mannose 1-phosphate from D-fructose 6-phosphate: step 1/2. Functionally, involved in xanthan production. In Xanthomonas campestris pv. campestris (strain ATCC 33913 / DSM 3586 / NCPPB 528 / LMG 568 / P 25), this protein is Xanthan biosynthesis protein XanB (xanB).